The following is a 278-amino-acid chain: Potassium/proton antiporter CemA (278 aa).

4 helical membrane-spanning segments follow: residues 61 to 81 (ILLLFISPVLVNQASKFFVFG), 155 to 175 (AVKNILSDLVSILVFILLMIT), 203 to 223 (IILFTDMFVGFHSPHGWEVII), and 238 to 258 (FIFLFISTFPVILDTIFKYWI).

The protein belongs to the CemA family.

The protein resides in the plastid. Its subcellular location is the chloroplast inner membrane. It carries out the reaction K(+)(in) + H(+)(out) = K(+)(out) + H(+)(in). Its function is as follows. Contributes to K(+)/H(+) antiport activity by supporting proton efflux to control proton extrusion and homeostasis in chloroplasts in a light-dependent manner to modulate photosynthesis. Prevents excessive induction of non-photochemical quenching (NPQ) under continuous-light conditions. Indirectly promotes efficient inorganic carbon uptake into chloroplasts. The sequence is that of Potassium/proton antiporter CemA from Pyropia yezoensis (Susabi-nori).